The primary structure comprises 305 residues: Taste receptor type 2 member 13 (305 aa).

Residues 1–7 are Extracellular-facing; the sequence is MGSNVYG. The chain crosses the membrane as a helical span at residues 8-28; it reads ILTMVMIAEFVFGNMSNGFIV. Residues 29–43 lie on the Cytoplasmic side of the membrane; sequence LINCIDWVRKGTLSS. The chain crosses the membrane as a helical span at residues 44–64; sequence IGWILLFLAISRMVLIWEMLI. The Extracellular portion of the chain corresponds to 65–88; that stretch reads TWIKYMKYSFSFVTGTELRGIMFT. A helical transmembrane segment spans residues 89 to 109; it reads WVISNHFSLWLATILSIFYLL. Over 110–128 the chain is Cytoplasmic; sequence KIASFSKPVFLYLKWREKK. A helical transmembrane segment spans residues 129–149; it reads VLLIVLLGNLIFLMLNILQIN. At 150-182 the chain is on the extracellular side; that stretch reads KHIEHWMYQYERNITWSSRVSDFAGFSNLVLLE. N162 carries an N-linked (GlcNAc...) asparagine glycan. Residues 183–203 form a helical membrane-spanning segment; sequence MIVFSVTPFTVALVSFILLIF. Residues 204–232 lie on the Cytoplasmic side of the membrane; that stretch reads SLWKHLQKMHLNSRGERDPSTKAHVNALR. Residues 233–253 form a helical membrane-spanning segment; it reads IMVSFLLLYATYFISFFLSLI. Topologically, residues 254 to 262 are extracellular; the sequence is PMAHKTRLG. A helical transmembrane segment spans residues 263 to 283; that stretch reads LMFSITVGLFYPSSHSFILIL. The Cytoplasmic portion of the chain corresponds to 284–305; sequence GHSNLRQASLWVMTYLKCGQKH.

The protein belongs to the G-protein coupled receptor T2R family.

It is found in the cell membrane. Its function is as follows. Receptor that may play a role in the perception of bitterness and is gustducin-linked. May play a role in sensing the chemical composition of the gastrointestinal content. The activity of this receptor may stimulate alpha gustducin, mediate PLC-beta-2 activation and lead to the gating of TRPM5. The protein is Taste receptor type 2 member 13 of Mus musculus (Mouse).